The primary structure comprises 296 residues: 6-hydroxypseudooxynicotine dehydrogenase complex subunit alpha (296 aa).

The FAD-binding PCMH-type domain maps to 1 to 177 (MKPPSFDYVV…VEVNVPQLPH (177 aa)). FAD-binding positions include 30-37 (IIAGGQSL), 111-115 (TIGGS), and Glu124.

Heterohexamer of 2 alpha (kdhA), 2 beta (kdhB) and 2 gamma (kdhC) subunit. Dimer of heterotrimers. FAD is required as a cofactor.

The catalysed reaction is 6-hydroxypseudooxynicotine + A + H2O = 2,6-dihydroxypseudooxynicotine + AH2. Its pathway is alkaloid degradation; nicotine degradation. Molybdo-flavoprotein enzyme complex involved in nicotine degradation. The subunit gamma (large subunit) contains the substrate-binding sites, the subunit alpha (medium subunit) binds FAD and the subunit beta (small subunit) has a 2Fe-2S ferredoxin-type domain which binds 2 2Fe-2S clusters. This Paenarthrobacter nicotinovorans (Arthrobacter nicotinovorans) protein is 6-hydroxypseudooxynicotine dehydrogenase complex subunit alpha (kdhA).